A 295-amino-acid polypeptide reads, in one-letter code: Polyisoprenoid diphosphate/phosphate phosphohydrolase PLPP6 (295 aa).

2 disordered regions span residues 1 to 39 (MPSP…SRFE) and 61 to 90 (SESP…PEED). Topologically, residues 1 to 132 (MPSPRRSMEG…ESSSWGSVRP (132 aa)) are cytoplasmic. Residues 16-27 (SASSSSSSPGSP) show a composition bias toward low complexity. A phosphoserine mark is found at Ser-26, Ser-36, and Ser-70. The chain crosses the membrane as a helical span at residues 133–153 (LMKLLEISGHGIPWLLGTLYC). The Lumenal segment spans residues 154-164 (LCRSDSWAGRE). Residues 165–185 (VLMNLLFALLLDLLLVALIKG) form a helical membrane-spanning segment. The phosphatase sequence motif I stretch occupies residues 184-192 (KGLVRRRRP). The Cytoplasmic portion of the chain corresponds to 186–228 (LVRRRRPAHNQMDMFVTLSVDKYSFPSGHATRAALMSRFILNH). Residues 211-214 (PSGH) form a phosphatase sequence motif II region. His-214 functions as the Proton donors in the catalytic mechanism. The helical transmembrane segment at 229–249 (LVLAIPLRVLVVLWAFVLGLS) threads the bilayer. The tract at residues 249 to 260 (SRVMLGRHNVTD) is phosphatase sequence motif III. The Lumenal segment spans residues 250–260 (RVMLGRHNVTD). His-256 serves as the catalytic Nucleophile. Residues 261–281 (VAFGFFLGYMQYSIVDYCWLS) traverse the membrane as a helical segment. The Cytoplasmic portion of the chain corresponds to 282–295 (PHNAPVLFLLWSQR).

Belongs to the PA-phosphatase related phosphoesterase family. Phosphorylation by PKC activates the phosphatase activity towards presqualene diphosphate. As to expression, widely expressed. Expressed in most organs, in particular gastrointestinal organs, spleen, placenta, kidney, thymus and brain.

The protein resides in the endoplasmic reticulum membrane. Its subcellular location is the nucleus envelope. The protein localises to the nucleus inner membrane. It carries out the reaction presqualene diphosphate + H2O = presqualene phosphate + phosphate + H(+). It catalyses the reaction presqualene phosphate + H2O = presqualene alcohol + phosphate. The catalysed reaction is (2E,6E)-farnesyl diphosphate + H2O = (2E,6E)-farnesyl phosphate + phosphate + H(+). The enzyme catalyses (2E,6E)-farnesyl phosphate + H2O = (2E,6E)-farnesol + phosphate. It carries out the reaction (2E,6E,10E)-geranylgeranyl diphosphate + H2O = (2E,6E,10E)-geranylgeranyl phosphate + phosphate + H(+). It catalyses the reaction (2E,6E,10E)-geranylgeranyl phosphate + H2O = (2E,6E,10E)-geranylgeraniol + phosphate. The catalysed reaction is (2E)-geranyl diphosphate + H2O = (2E)-geranyl phosphate + phosphate + H(+). The enzyme catalyses (2E)-geranyl phosphate + H2O = (2E)-geraniol + phosphate. It carries out the reaction 1,2-dihexadecanoyl-sn-glycero-3-phosphate + H2O = 1,2-dihexadecanoyl-sn-glycerol + phosphate. With respect to regulation, inhibited by propranolol. Not inhibited by N-ethylmaleimide or bromoenolactome. In terms of biological role, magnesium-independent polyisoprenoid diphosphatase that catalyzes the sequential dephosphorylation of presqualene, farnesyl, geranyl and geranylgeranyl diphosphates. Functions in the innate immune response through the dephosphorylation of presqualene diphosphate which acts as a potent inhibitor of the signaling pathways contributing to polymorphonuclear neutrophils activation. May regulate the biosynthesis of cholesterol and related sterols by dephosphorylating presqualene and farnesyl diphosphate, two key intermediates in this biosynthetic pathway. May also play a role in protein prenylation by acting on farnesyl diphosphate and its derivative geranylgeranyl diphosphate, two precursors for the addition of isoprenoid anchors to membrane proteins. Has a lower activity towards phosphatidic acid (PA), but through phosphatidic acid dephosphorylation may participate in the biosynthesis of phospholipids and triacylglycerols. May also act on ceramide-1-P, lysophosphatidic acid (LPA) and sphing-4-enine 1-phosphate/sphingosine-1-phosphate. The chain is Polyisoprenoid diphosphate/phosphate phosphohydrolase PLPP6 from Homo sapiens (Human).